A 258-amino-acid chain; its full sequence is Deoxyribose-phosphate aldolase (258 aa).

The Proton donor/acceptor role is filled by aspartate 102. Residue lysine 165 is the Schiff-base intermediate with acetaldehyde of the active site. Lysine 199 functions as the Proton donor/acceptor in the catalytic mechanism.

Belongs to the DeoC/FbaB aldolase family. DeoC type 2 subfamily.

It localises to the cytoplasm. It carries out the reaction 2-deoxy-D-ribose 5-phosphate = D-glyceraldehyde 3-phosphate + acetaldehyde. It participates in carbohydrate degradation; 2-deoxy-D-ribose 1-phosphate degradation; D-glyceraldehyde 3-phosphate and acetaldehyde from 2-deoxy-alpha-D-ribose 1-phosphate: step 2/2. Its function is as follows. Catalyzes a reversible aldol reaction between acetaldehyde and D-glyceraldehyde 3-phosphate to generate 2-deoxy-D-ribose 5-phosphate. In Aliivibrio fischeri (strain MJ11) (Vibrio fischeri), this protein is Deoxyribose-phosphate aldolase.